A 660-amino-acid polypeptide reads, in one-letter code: Chaperone protein DnaK (660 aa).

T201 is subject to Phosphothreonine; by autocatalysis. The segment at 599-660 (EAMQAQSASA…ADVEIVDKPE (62 aa)) is disordered. Residues 600 to 617 (AMQAQSASAAASSAANAQ) show a composition bias toward low complexity.

This sequence belongs to the heat shock protein 70 family.

In terms of biological role, acts as a chaperone. This Chlamydia trachomatis serovar A (strain ATCC VR-571B / DSM 19440 / HAR-13) protein is Chaperone protein DnaK.